Here is a 327-residue protein sequence, read N- to C-terminus: Methionyl-tRNA formyltransferase (327 aa).

121-124 (SLLP) provides a ligand contact to (6S)-5,6,7,8-tetrahydrofolate.

The protein belongs to the Fmt family.

It carries out the reaction L-methionyl-tRNA(fMet) + (6R)-10-formyltetrahydrofolate = N-formyl-L-methionyl-tRNA(fMet) + (6S)-5,6,7,8-tetrahydrofolate + H(+). In terms of biological role, attaches a formyl group to the free amino group of methionyl-tRNA(fMet). The formyl group appears to play a dual role in the initiator identity of N-formylmethionyl-tRNA by promoting its recognition by IF2 and preventing the misappropriation of this tRNA by the elongation apparatus. The protein is Methionyl-tRNA formyltransferase of Burkholderia vietnamiensis (strain G4 / LMG 22486) (Burkholderia cepacia (strain R1808)).